The primary structure comprises 97 residues: Large ribosomal subunit protein bL28 (97 aa).

The protein belongs to the bacterial ribosomal protein bL28 family.

The sequence is that of Large ribosomal subunit protein bL28 from Rickettsia prowazekii (strain Madrid E).